The primary structure comprises 439 residues: Ribosomal protein uS12 methylthiotransferase RimO (439 aa).

The MTTase N-terminal domain maps to 5-115; sequence PKIGFVSLGC…LIEAVHTHAP (111 aa). Cys14, Cys50, Cys79, Cys146, Cys150, and Cys153 together coordinate [4Fe-4S] cluster. Residues 132 to 369 form the Radical SAM core domain; it reads LTPRHYSYLK…MGLQAQISAD (238 aa). The 68-residue stretch at 372–439 folds into the TRAM domain; sequence QRFVGTEQQV…ESTEYDLIAD (68 aa).

The protein belongs to the methylthiotransferase family. RimO subfamily. Requires [4Fe-4S] cluster as cofactor.

The protein localises to the cytoplasm. The enzyme catalyses L-aspartate(89)-[ribosomal protein uS12]-hydrogen + (sulfur carrier)-SH + AH2 + 2 S-adenosyl-L-methionine = 3-methylsulfanyl-L-aspartate(89)-[ribosomal protein uS12]-hydrogen + (sulfur carrier)-H + 5'-deoxyadenosine + L-methionine + A + S-adenosyl-L-homocysteine + 2 H(+). Functionally, catalyzes the methylthiolation of an aspartic acid residue of ribosomal protein uS12. In Francisella philomiragia subsp. philomiragia (strain ATCC 25017 / CCUG 19701 / FSC 153 / O#319-036), this protein is Ribosomal protein uS12 methylthiotransferase RimO.